The primary structure comprises 148 residues: MIKEELNLWAEGVEFKHWDAYYNFILSVLDFLCIKEYELSVILCNNEYIQKLNSQFRQKSEPTDVLSFNYLEESGQIDHKIQGDLIISLEYLEFSSLEFNVELYDELQRNTIHGILHLIGYTHKTNDFQNEEMLIIQEKVLRETRRVF.

Positions 113, 117, and 123 each coordinate Zn(2+).

It belongs to the endoribonuclease YbeY family. Zn(2+) is required as a cofactor.

It is found in the cytoplasm. In terms of biological role, single strand-specific metallo-endoribonuclease involved in late-stage 70S ribosome quality control and in maturation of the 3' terminus of the 16S rRNA. The protein is Endoribonuclease YbeY of Borrelia turicatae (strain 91E135).